Consider the following 231-residue polypeptide: Potassium/proton antiporter CemA (231 aa).

A run of 4 helical transmembrane segments spans residues 7–27, 116–136, 156–176, and 191–211; these read FISL…SLSF, IISF…LIFL, ILLL…ELMI, and IISG…KYWI.

It belongs to the CemA family.

It is found in the plastid. It localises to the chloroplast inner membrane. It catalyses the reaction K(+)(in) + H(+)(out) = K(+)(out) + H(+)(in). Contributes to K(+)/H(+) antiport activity by supporting proton efflux to control proton extrusion and homeostasis in chloroplasts in a light-dependent manner to modulate photosynthesis. Prevents excessive induction of non-photochemical quenching (NPQ) under continuous-light conditions. Indirectly promotes efficient inorganic carbon uptake into chloroplasts. The polypeptide is Potassium/proton antiporter CemA (Morus indica (Mulberry)).